Here is a 221-residue protein sequence, read N- to C-terminus: 7-cyano-7-deazaguanine synthase (221 aa).

8 to 18 (LSGGMDSAAVI) contributes to the ATP binding site. Residues C186, C196, C199, and C202 each contribute to the Zn(2+) site.

It belongs to the QueC family. Requires Zn(2+) as cofactor.

It catalyses the reaction 7-carboxy-7-deazaguanine + NH4(+) + ATP = 7-cyano-7-deazaguanine + ADP + phosphate + H2O + H(+). Its pathway is purine metabolism; 7-cyano-7-deazaguanine biosynthesis. Catalyzes the ATP-dependent conversion of 7-carboxy-7-deazaguanine (CDG) to 7-cyano-7-deazaguanine (preQ(0)). In Stenotrophomonas maltophilia (strain R551-3), this protein is 7-cyano-7-deazaguanine synthase.